The sequence spans 212 residues: Leucyl/phenylalanyl-tRNA--protein transferase (212 aa).

The protein belongs to the L/F-transferase family.

The protein localises to the cytoplasm. The catalysed reaction is N-terminal L-lysyl-[protein] + L-leucyl-tRNA(Leu) = N-terminal L-leucyl-L-lysyl-[protein] + tRNA(Leu) + H(+). It carries out the reaction N-terminal L-arginyl-[protein] + L-leucyl-tRNA(Leu) = N-terminal L-leucyl-L-arginyl-[protein] + tRNA(Leu) + H(+). The enzyme catalyses L-phenylalanyl-tRNA(Phe) + an N-terminal L-alpha-aminoacyl-[protein] = an N-terminal L-phenylalanyl-L-alpha-aminoacyl-[protein] + tRNA(Phe). In terms of biological role, functions in the N-end rule pathway of protein degradation where it conjugates Leu, Phe and, less efficiently, Met from aminoacyl-tRNAs to the N-termini of proteins containing an N-terminal arginine or lysine. This is Leucyl/phenylalanyl-tRNA--protein transferase from Christiangramia forsetii (strain DSM 17595 / CGMCC 1.15422 / KT0803) (Gramella forsetii).